The chain runs to 482 residues: BTB/POZ domain and ankyrin repeat-containing protein NOOT1 (482 aa).

One can recognise a BTB domain in the interval 25–107; that stretch reads SDVVFSVEGR…LYSGQVSIVP (83 aa). Residues 113-127 form a C2HC NPR-type zinc finger; that stretch reads RPNCGDRGCWHTHCT. Cysteine 116, cysteine 121, histidine 123, and cysteine 126 together coordinate Zn(2+). ANK repeat units lie at residues 249–278, 279–308, 313–342, and 346–380; these read QKIR…LNLD, EALA…DVNF, TGKT…DPNV, and DGVT…KLRL. Residues 395–434 are disordered; that stretch reads EEGNNNNSNNNNNATASSATNMYPHHNMNEDHHHSHNNNN. Low complexity predominate over residues 398–415; that stretch reads NNNNSNNNNNATASSATN.

The protein belongs to the plant 'ANKYRIN-BTB/POZ' family. 'NOOT-BOP-COCH-like' (NBCL) subfamily. Homodimer. Expressed in the shoot apical meristem (SAM) at the base of the developing leaf where stipules are formed. Associated with functional and vestigial abscission zones (AZs), including pulvini.

It is found in the nucleus. The protein resides in the cytoplasm. It localises to the cell membrane. The protein operates within protein modification; protein ubiquitination. Its function is as follows. May act as a substrate-specific adapter of an E3 ubiquitin-protein ligase complex (CUL3-RBX1-BTB) which mediates the ubiquitination and subsequent proteasomal degradation of target proteins. Transcriptional co-regulator involved in the promotion of leaf and floral meristem fate and determinacy. Promotes normal stipule growth and development. Required for the abscission of senescent organs, probably by regulating the cell wall disorganization in abscission zones (AZs, e.g. pulvini at the base of leaves). Involved in the coordination of the symbiotic nodule developmental program. Promotes the formation of root nodules by interacting directly with APP1 to modulate the expression of the nuclear transcription factor Y subunit (NF-YA1), a key nodulin. Necessary for the robust maintenance of nodule identity throughout the nodule developmental program. Involved in the regulation of indeterminate nodule identity in association with NOOT2. The protein is BTB/POZ domain and ankyrin repeat-containing protein NOOT1 of Medicago truncatula (Barrel medic).